The chain runs to 397 residues: Lysophospholipid transporter LplT (397 aa).

At 1 to 17 the chain is on the periplasmic side; the sequence is MSESVHTNTSLWSKGMK. A helical membrane pass occupies residues 18-38; sequence AVIVAQFLSAFGDNALLFATL. At 39 to 52 the chain is on the cytoplasmic side; the sequence is ALLKAQFYPEWSQP. The chain crosses the membrane as a helical span at residues 53–73; it reads ILQMVFVGAYILFAPFVGQVA. At 74 to 90 the chain is on the periplasmic side; it reads DSFAKGRVMMFANGLKL. A helical transmembrane segment spans residues 91 to 111; that stretch reads LGAASICFGINPFLGYTLVGV. The Cytoplasmic segment spans residues 112–144; the sequence is GAAAYSPAKYGILGELTTGSKLVKANGLMEAST. A helical membrane pass occupies residues 145–165; sequence IAAILLGSVAGGVLADWHVLV. Residue A166 is a topological domain, periplasmic. A helical transmembrane segment spans residues 167 to 187; that stretch reads LAACALAYGGAVVANIYIPKL. The Cytoplasmic portion of the chain corresponds to 188-226; it reads AAARPGQSWNLINMTRSFLNACTSLWCNGETRFSLVGTS. The helical transmembrane segment at 227-247 threads the bilayer; it reads LFWGAGVTLRFLLVLWVPVAL. Residues 248–256 are Periplasmic-facing; it reads GITDNATPT. The chain crosses the membrane as a helical span at residues 257–277; it reads YLNAMVAIGIVVGAGAAAKLV. Residues 278–280 lie on the Cytoplasmic side of the membrane; sequence TLE. A helical membrane pass occupies residues 281 to 301; it reads TVSRCMPAGILIGVVVLIFSL. Residues 302–304 lie on the Periplasmic side of the membrane; that stretch reads QHE. A helical membrane pass occupies residues 305-325; it reads LLPAYALLMLIGVLGGFFVVP. Topologically, residues 326-343 are cytoplasmic; that stretch reads LNALLQERGKKSVGAGNA. A helical membrane pass occupies residues 344 to 364; that stretch reads IAVQNLGENSAMLLMLGIYSL. Over 365–366 the chain is Periplasmic; it reads AV. A helical transmembrane segment spans residues 367–387; sequence MVGIPVVPIGIGFGALFALAI. Residues 388-397 lie on the Cytoplasmic side of the membrane; sequence TALWIWQRRH.

This sequence belongs to the major facilitator superfamily. LplT (TC 2.A.1.42) family.

The protein resides in the cell inner membrane. Catalyzes the facilitated diffusion of 2-acyl-glycero-3-phosphoethanolamine (2-acyl-GPE) into the cell. This Shigella dysenteriae serotype 1 (strain Sd197) protein is Lysophospholipid transporter LplT.